Consider the following 342-residue polypeptide: tRNA N6-adenosine threonylcarbamoyltransferase (342 aa).

His-111 and His-115 together coordinate Fe cation. Substrate is bound by residues 134–138 (LVSGG), Asp-167, Gly-180, and Asn-274. Asp-302 contributes to the Fe cation binding site.

The protein belongs to the KAE1 / TsaD family. Fe(2+) serves as cofactor.

The protein resides in the cytoplasm. The enzyme catalyses L-threonylcarbamoyladenylate + adenosine(37) in tRNA = N(6)-L-threonylcarbamoyladenosine(37) in tRNA + AMP + H(+). Its function is as follows. Required for the formation of a threonylcarbamoyl group on adenosine at position 37 (t(6)A37) in tRNAs that read codons beginning with adenine. Is involved in the transfer of the threonylcarbamoyl moiety of threonylcarbamoyl-AMP (TC-AMP) to the N6 group of A37, together with TsaE and TsaB. TsaD likely plays a direct catalytic role in this reaction. The chain is tRNA N6-adenosine threonylcarbamoyltransferase from Herminiimonas arsenicoxydans.